The following is a 511-amino-acid chain: ADP,ATP carrier protein 4 (511 aa).

Transmembrane regions (helical) follow at residues 34-54 (VSKFLFITLLMFCILFIQNLI), 71-91 (ISFLKFWGVMPSAFLMTAIYV), 102-122 (IFYLIISIFLAFFALFAYVIF), 157-177 (FSLFYIIAELWPNVVFALLFW), 192-212 (FYPLFGLLSQTGIYLAGQFLE), 231-251 (FHTLSIQIILTIVLILGIIAI), 296-316 (LIATLLICYGIAINLVEGPWK), 330-350 (AAFIGSYLSYTGVFTILFVVL), 361-381 (FTAAVITPLIVFITGILFFAV), 390-410 (LIIANFILTDPALIAITIGAI), 453-473 (LGKSGSAFLQSLVFIILPSAS), and 476-496 (SISICLMIIFIITCLTWLWAT).

The protein belongs to the ADP/ATP translocase tlc family.

It localises to the cell membrane. In terms of biological role, provides the rickettsial cell with host ATP in exchange for rickettsial ADP. This is an obligate exchange system. This energy acquiring activity is an important component of rickettsial parasitism. This chain is ADP,ATP carrier protein 4 (tlcD), found in Rickettsia felis (strain ATCC VR-1525 / URRWXCal2) (Rickettsia azadi).